Here is a 257-residue protein sequence, read N- to C-terminus: MASKIGSRRWMLQLIMQLGSVLLTRCPFWGCFSQLMLYAERAEARRKPDIPVPYLYFDMGAAVLCASFMSFGVKRRWFALGAALQLAISTYTAYIGGYVHYGDWLKVRMYSRTVAIIGGFLVLASGAGELYRRKPRSRSLQSTGQVFLGIYLICVAYSLQHSKEDRLAYLNHLPGGELMVQLFFVLYGVLALAFLSGYYVTLAAQILAVLLPPVMLLIDGNVSYWHNTRRVEFWNQMKLLGESVGIFGAAVILATDG.

The next 8 helical transmembrane spans lie at 24-40, 52-72, 77-97, 110-130, 139-159, 182-202, 206-226, and 233-253; these read TRCP…LYAE, VPYL…MSFG, WFAL…YIGG, YSRT…AGEL, SLQS…AYSL, LFFV…YVTL, ILAV…SYWH, and FWNQ…AVIL.

The protein localises to the membrane. May activate NF-kappa-B signaling pathways. This is Transmembrane protein 101 (Tmem101) from Mus musculus (Mouse).